The sequence spans 152 residues: Nucleoside diphosphate kinase A 2 (152 aa).

Residues Lys-12, Phe-60, Arg-88, Thr-94, Arg-105, and Asn-115 each coordinate ATP. The active-site Pros-phosphohistidine intermediate is His-118.

It belongs to the NDK family. Homohexamer. The cofactor is Mg(2+). The N-terminus is blocked.

It is found in the cytoplasm. It localises to the cell membrane. Its subcellular location is the nucleus. The enzyme catalyses a 2'-deoxyribonucleoside 5'-diphosphate + ATP = a 2'-deoxyribonucleoside 5'-triphosphate + ADP. The catalysed reaction is a ribonucleoside 5'-diphosphate + ATP = a ribonucleoside 5'-triphosphate + ADP. Autophosphorylation at His-118 increases serine/threonine protein kinase activity of the enzyme. Interaction with the SET complex inhibits exonuclease activity. Its function is as follows. Major role in the synthesis of nucleoside triphosphates other than ATP. Possesses nucleoside-diphosphate kinase, serine/threonine-specific protein kinase, geranyl and farnesyl pyrophosphate kinase, histidine protein kinase and 3'-5' exonuclease activities. Involved in cell proliferation, differentiation and development, signal transduction, G protein-coupled receptor endocytosis, and gene expression. Required for neural development including neural patterning and cell fate determination. In Bos taurus (Bovine), this protein is Nucleoside diphosphate kinase A 2 (NME1-2).